Here is a 404-residue protein sequence, read N- to C-terminus: Ubiquitin-like modifier-activating enzyme 5 (404 aa).

Residues G83, D104, K127, N150, and N184 each coordinate ATP. Zn(2+) is bound by residues C226 and C229. Residue C250 is the Glycyl thioester intermediate of the active site. Zn(2+)-binding residues include C303 and C308. Residues 372-393 form a disordered region; it reads APEKSSETSEETVTAATADETS. Positions 382–391 are enriched in low complexity; it reads ETVTAATADE.

Belongs to the ubiquitin-activating E1 family. UBA5 subfamily.

E1-like enzyme which activates UFM1. In Drosophila sechellia (Fruit fly), this protein is Ubiquitin-like modifier-activating enzyme 5.